The chain runs to 316 residues: Ribosomal RNA small subunit methyltransferase H (316 aa).

Residues 35–37 (GGH), D55, F79, D101, and Q108 contribute to the S-adenosyl-L-methionine site.

This sequence belongs to the methyltransferase superfamily. RsmH family.

The protein localises to the cytoplasm. The enzyme catalyses cytidine(1402) in 16S rRNA + S-adenosyl-L-methionine = N(4)-methylcytidine(1402) in 16S rRNA + S-adenosyl-L-homocysteine + H(+). Its function is as follows. Specifically methylates the N4 position of cytidine in position 1402 (C1402) of 16S rRNA. The protein is Ribosomal RNA small subunit methyltransferase H of Aliivibrio fischeri (strain MJ11) (Vibrio fischeri).